Consider the following 72-residue polypeptide: Translation initiation factor IF-1 (72 aa).

In terms of domain architecture, S1-like spans 1–72 (MAKDDVIEVD…DKGRITFRYK (72 aa)).

The protein belongs to the IF-1 family. Component of the 30S ribosomal translation pre-initiation complex which assembles on the 30S ribosome in the order IF-2 and IF-3, IF-1 and N-formylmethionyl-tRNA(fMet); mRNA recruitment can occur at any time during PIC assembly.

The protein resides in the cytoplasm. Functionally, one of the essential components for the initiation of protein synthesis. Stabilizes the binding of IF-2 and IF-3 on the 30S subunit to which N-formylmethionyl-tRNA(fMet) subsequently binds. Helps modulate mRNA selection, yielding the 30S pre-initiation complex (PIC). Upon addition of the 50S ribosomal subunit IF-1, IF-2 and IF-3 are released leaving the mature 70S translation initiation complex. This Wolinella succinogenes (strain ATCC 29543 / DSM 1740 / CCUG 13145 / JCM 31913 / LMG 7466 / NCTC 11488 / FDC 602W) (Vibrio succinogenes) protein is Translation initiation factor IF-1.